The chain runs to 253 residues: Phosphoribosylaminoimidazole-succinocarboxamide synthase (253 aa).

The protein belongs to the SAICAR synthetase family.

It catalyses the reaction 5-amino-1-(5-phospho-D-ribosyl)imidazole-4-carboxylate + L-aspartate + ATP = (2S)-2-[5-amino-1-(5-phospho-beta-D-ribosyl)imidazole-4-carboxamido]succinate + ADP + phosphate + 2 H(+). It functions in the pathway purine metabolism; IMP biosynthesis via de novo pathway; 5-amino-1-(5-phospho-D-ribosyl)imidazole-4-carboxamide from 5-amino-1-(5-phospho-D-ribosyl)imidazole-4-carboxylate: step 1/2. This Roseobacter denitrificans (strain ATCC 33942 / OCh 114) (Erythrobacter sp. (strain OCh 114)) protein is Phosphoribosylaminoimidazole-succinocarboxamide synthase.